The chain runs to 345 residues: Glycosyltransferase 1 domain-containing protein 1 (345 aa).

The first 19 residues, 1-19 (MKILFLACLRAHTGNSTTA), serve as a signal peptide directing secretion. Asparagine 246 and asparagine 322 each carry an N-linked (GlcNAc...) asparagine glycan.

This sequence belongs to the glycosyltransferase group 1 family. Glycosyltransferase 4 subfamily.

The protein localises to the secreted. The polypeptide is Glycosyltransferase 1 domain-containing protein 1 (glt1d1) (Xenopus tropicalis (Western clawed frog)).